Here is a 135-residue protein sequence, read N- to C-terminus: Adult cuticle protein 1 (135 aa).

The N-terminal stretch at 1–19 (MKFAVAVIFTLALAMGVQS) is a signal peptide. Repeat copies occupy residues 72–75 (AAPA), 78–81 (AAPA), and 128–131 (AAPA).

Detected in the epidermis underlying the head and thorax (including legs and wings), but not in the abdominal epidermis of newly eclosed flies.

Component of the cuticle of the adult fruit fly. Could be involved in thickening of the hard adult cuticle. The chain is Adult cuticle protein 1 (Acp1) from Drosophila melanogaster (Fruit fly).